The sequence spans 766 residues: 5-methyltetrahydropteroyltriglutamate--homocysteine methyltransferase (766 aa).

Residues 16-19 (RELK) and Lys117 each bind 5-methyltetrahydropteroyltri-L-glutamate. L-homocysteine-binding positions include 442–444 (IGS) and Glu495. L-methionine is bound by residues 442-444 (IGS) and Glu495. 5-methyltetrahydropteroyltri-L-glutamate contacts are provided by residues 526–527 (RC) and Trp572. Asp610 contacts L-homocysteine. An L-methionine-binding site is contributed by Asp610. A 5-methyltetrahydropteroyltri-L-glutamate-binding site is contributed by Glu616. Zn(2+) contacts are provided by His652, Cys654, and Glu676. The Proton donor role is filled by His705. Residue Cys737 coordinates Zn(2+).

Belongs to the vitamin-B12 independent methionine synthase family. Zn(2+) serves as cofactor.

It catalyses the reaction 5-methyltetrahydropteroyltri-L-glutamate + L-homocysteine = tetrahydropteroyltri-L-glutamate + L-methionine. The protein operates within amino-acid biosynthesis; L-methionine biosynthesis via de novo pathway; L-methionine from L-homocysteine (MetE route): step 1/1. Catalyzes the transfer of a methyl group from 5-methyltetrahydrofolate to homocysteine resulting in methionine formation. The polypeptide is 5-methyltetrahydropteroyltriglutamate--homocysteine methyltransferase (Bordetella avium (strain 197N)).